Reading from the N-terminus, the 380-residue chain is Tubulin-like protein CetZ (380 aa).

Residues glutamine 10–lysine 14, glycine 103–glycine 105, glutamate 136, asparagine 163, and asparagine 181 each bind GTP. Residues proline 359 to arginine 380 form a disordered region.

It belongs to the CetZ family.

The protein resides in the cytoplasm. Functionally, involved in cell shape control. The sequence is that of Tubulin-like protein CetZ from Thermococcus kodakarensis (strain ATCC BAA-918 / JCM 12380 / KOD1) (Pyrococcus kodakaraensis (strain KOD1)).